A 789-amino-acid polypeptide reads, in one-letter code: Probable DNA helicase MCM8 (789 aa).

The C4-type zinc finger occupies 174–201 (CMKCATKFPRVFCDGKFSPPVSCSIQGC). The 208-residue stretch at 339–546 (VFRQILHSFC…LLDKRVSDHI (208 aa)) folds into the MCM domain. 391–398 (GDPGLGKS) provides a ligand contact to ATP. Positions 522–525 (SRFD) match the Arginine finger motif.

It belongs to the MCM family.

It localises to the nucleus. It carries out the reaction ATP + H2O = ADP + phosphate + H(+). Functionally, probable DNA helicase that may play a role in DNA repair durin meiosis. This is Probable DNA helicase MCM8 (MCM8) from Oryza sativa subsp. indica (Rice).